Reading from the N-terminus, the 897-residue chain is Protein translocase subunit SecA (897 aa).

ATP is bound by residues Q87, 105-109, and D512; that span reads GEGKT. Positions 846–897 are disordered; sequence EEEQQKQARKKMVFNLVDEDETSEPSKSKKLAGRNEPCPCGSGKKYKKCCGK. C883, C885, C894, and C895 together coordinate Zn(2+).

This sequence belongs to the SecA family. As to quaternary structure, monomer and homodimer. Part of the essential Sec protein translocation apparatus which comprises SecA, SecYEG and auxiliary proteins SecDF-YajC and YidC. It depends on Zn(2+) as a cofactor.

The protein resides in the cell inner membrane. It is found in the cytoplasm. The catalysed reaction is ATP + H2O + cellular proteinSide 1 = ADP + phosphate + cellular proteinSide 2.. Functionally, part of the Sec protein translocase complex. Interacts with the SecYEG preprotein conducting channel. Has a central role in coupling the hydrolysis of ATP to the transfer of proteins into and across the cell membrane, serving as an ATP-driven molecular motor driving the stepwise translocation of polypeptide chains across the membrane. The protein is Protein translocase subunit SecA of Geobacter sulfurreducens (strain ATCC 51573 / DSM 12127 / PCA).